A 335-amino-acid polypeptide reads, in one-letter code: Ubiquinone biosynthesis protein COQ4, mitochondrial (335 aa).

The transit peptide at 1-10 (MLRLSLLRST) directs the protein to the mitochondrion. His-210, Asp-211, His-214, and Glu-226 together coordinate Zn(2+).

This sequence belongs to the COQ4 family. As to quaternary structure, component of a multi-subunit COQ enzyme complex, composed of at least COQ3, COQ4, COQ5, COQ6, COQ7 and COQ9. Interacts with COQ3. It depends on Zn(2+) as a cofactor.

It is found in the mitochondrion inner membrane. It catalyses the reaction 4-hydroxy-3-methoxy-5-(all-trans-hexaprenyl)benzoate + H(+) = 2-methoxy-6-(all-trans-hexaprenyl)phenol + CO2. Its pathway is cofactor biosynthesis; ubiquinone biosynthesis. Functionally, lyase that catalyzes the C1-decarboxylation of 4-hydroxy-3-methoxy-5-(all-trans-hexaprenyl)benzoic acid into 2-methoxy-6-(all-trans-hexaprenyl)phenol during ubiquinone biosynthesis. The polypeptide is Ubiquinone biosynthesis protein COQ4, mitochondrial (Saccharomyces cerevisiae (strain AWRI1631) (Baker's yeast)).